Reading from the N-terminus, the 953-residue chain is 26S proteasome non-ATPase regulatory subunit 1 (953 aa).

M1 is subject to N-acetylmethionine. Position 273 is a phosphothreonine (T273). Positions 277–319 (SVPGSTNTGTVPGSEKDSDPMETEEKTASAVAGKTPDASPEPK) are disordered. A Phosphoserine modification is found at S290. The span at 290–303 (SEKDSDPMETEEKT) shows a compositional bias: basic and acidic residues. K310 carries the N6-acetyllysine modification. T311 carries the phosphothreonine modification. S315 carries the phosphoserine modification. PC repeat units follow at residues 403–436 (TATA…PGSA), 441–474 (GGLY…DIVR), 476–510 (GGSL…VTGE), 511–545 (AAGL…EKIL), 547–580 (GLAV…ILRR), 581–616 (SGMY…DVRR), 617–649 (AAVE…PHVR), 651–685 (GAAM…YVRQ), 686–726 (GALI…DVMA), and 729–761 (GAIL…PSVV). Position 720 is an N6-acetyllysine (K720). Phosphothreonine is present on T830. The residue at position 834 (S834) is a Phosphoserine. Disordered stretches follow at residues 839 to 881 (AKKK…LDNP) and 930 to 953 (AHGP…YIDD). 2 stretches are compositionally biased toward basic and acidic residues: residues 842–852 (KEKEKEKKEEE) and 859–872 (AEKK…KEPE). Positions 936–953 (EEEEQEPEPPEPFEYIDD) are enriched in acidic residues.

The protein belongs to the proteasome subunit S1 family. As to quaternary structure, component of the 19S proteasome regulatory particle complex. The 26S proteasome consists of a 20S core particle (CP) and two 19S regulatory subunits (RP). The regulatory particle is made of a lid composed of 9 subunits, a base containing 6 ATPases and few additional components including PSMD1. Interacts with ADRM1. Interacts with ZFAND1.

Its function is as follows. Component of the 26S proteasome, a multiprotein complex involved in the ATP-dependent degradation of ubiquitinated proteins. This complex plays a key role in the maintenance of protein homeostasis by removing misfolded or damaged proteins, which could impair cellular functions, and by removing proteins whose functions are no longer required. Therefore, the proteasome participates in numerous cellular processes, including cell cycle progression, apoptosis, or DNA damage repair. The sequence is that of 26S proteasome non-ATPase regulatory subunit 1 (Psmd1) from Mus musculus (Mouse).